Reading from the N-terminus, the 385-residue chain is Chaperone protein DnaJ (385 aa).

In terms of domain architecture, J spans 5-70 (DFYEVLGVSR…QKKAAYDQYG (66 aa)). The CR-type zinc-finger motif lies at 137 to 214 (GVSKEIEVPT…CHGQGRKQKT (78 aa)). 8 residues coordinate Zn(2+): cysteine 150, cysteine 153, cysteine 167, cysteine 170, cysteine 189, cysteine 192, cysteine 202, and cysteine 205. CXXCXGXG motif repeat units follow at residues 150–157 (CDTCDGSG), 167–174 (CGTCHGHG), 189–196 (CPTCHGKG), and 202–209 (CNECHGQG).

It belongs to the DnaJ family. Homodimer. It depends on Zn(2+) as a cofactor.

It is found in the cytoplasm. Its function is as follows. Participates actively in the response to hyperosmotic and heat shock by preventing the aggregation of stress-denatured proteins and by disaggregating proteins, also in an autonomous, DnaK-independent fashion. Unfolded proteins bind initially to DnaJ; upon interaction with the DnaJ-bound protein, DnaK hydrolyzes its bound ATP, resulting in the formation of a stable complex. GrpE releases ADP from DnaK; ATP binding to DnaK triggers the release of the substrate protein, thus completing the reaction cycle. Several rounds of ATP-dependent interactions between DnaJ, DnaK and GrpE are required for fully efficient folding. Also involved, together with DnaK and GrpE, in the DNA replication of plasmids through activation of initiation proteins. The protein is Chaperone protein DnaJ of Vibrio harveyi (Beneckea harveyi).